A 504-amino-acid polypeptide reads, in one-letter code: MSKKFTMTLLSSSLAGLLVMSGGVSAQEEKYTVPYAIGEGKWGNTYEVVKTGGNGNFRYEVKEKNGKKRSLFTFDSKGDVIINGSGITYTIHDGALNDFAQTAEKKKNGQSQSHRMTDSVVRDVYNKVYSLQRTKITGFSVEDGENGKVSLGSDAKASGEFSVAVGTGARADKKFATAVGSWAAADGKQSTALGVGAYAYANASTAAGTAAYVDGSAIYGTAIGNYAKVDENATEGTALGAKATVTNKNSVALGANSVTTRDNEVYIGYKTGTESDKTYGTRVLGGLSDGTRNSDAATVGQLNRKVGGVYDDVKARITVESEKQKKYTDQKTSEVNEKVEARTTVGVDSDGKLTRAEGATKTIAVNDGLVALSGRTDRIDYAVGAIDGRVTRNTQSIEKNSKAIAANTRTLQQHSARLDSQQRQINENHKEMKRAAAQSAALTGLFQPYSVGKFNATAAVGGYSDQQALAVGVGYRFNEQTAAKAGVAFSDGDASWNVGVNFEF.

The first 26 residues, Met1–Ala26, serve as a signal peptide directing secretion. A surface exposed passenger domain region spans residues Gln27–Gln413. At Gln27–Lys453 the chain is on the extracellular side. The head domain stretch occupies residues Asp154 to Gly280. Positions Thr281–Ala296 are neck. Positions Ala297–Arg342 are right-handed coiled-coil (RHcc). Residues Thr343–Gly368 are saddle domain. Residues Leu369 to Arg434 are left-handed coiled-coil (LHcc). Residues Leu411–Gln438 adopt a coiled-coil conformation. The tract at residues Leu411–Lys453 is outer membrane translocation of the passenger domain. The next 4 membrane-spanning stretches (beta stranded) occupy residues Phe454–Ser464, Gln467–Asn478, Thr481–Ser490, and Ala494–Phe504. A translocator domain region spans residues Phe454–Phe504.

The protein belongs to the autotransporter-2 (AT-2) (TC 1.B.40) family. Eib subfamily. As to quaternary structure, homotrimer; can probably form mixed heterotrimers in vivo. Will form mixed heterotrimers with EibD; these are correctly located in the outer membrane and bind IgG Fc, although less well than homotrimers. In denaturing gels runs as a band of about 200 kDa. Binds the Fc portion of immunoglobulins; binds more than 1 Fc per subunit.

Its subcellular location is the cell surface. It localises to the cell outer membrane. Its function is as follows. Binds (in a non-immune fashion) to the Fc portion of human IgG and less well to IgA; binding occurs on the cell surface. Confers the ability to survive exposure to human serum exposure. Binds to the Fc portion of human IgG and IgA and to whole mouse antibodies also via Fc. This chain is Immunoglobulin-binding protein EibC, found in Escherichia coli.